A 351-amino-acid chain; its full sequence is Hydroxymethylglutaryl-CoA synthase (351 aa).

Aspartate 30 is a binding site for (3S)-3-hydroxy-3-methylglutaryl-CoA. Glutamate 82 (proton donor/acceptor) is an active-site residue. Residues cysteine 114, serine 155, threonine 203, and histidine 236 each contribute to the (3S)-3-hydroxy-3-methylglutaryl-CoA site. Cysteine 114 functions as the Acyl-thioester intermediate in the catalytic mechanism. Histidine 236 acts as the Proton donor/acceptor in catalysis. Arginine 241 is a binding site for CoA. The (3S)-3-hydroxy-3-methylglutaryl-CoA site is built by arginine 245, asparagine 268, and serine 298.

Belongs to the thiolase-like superfamily. Archaeal HMG-CoA synthase family. As to quaternary structure, interacts with acetoacetyl-CoA thiolase that catalyzes the precedent step in the pathway and with a DUF35 protein. The acetoacetyl-CoA thiolase/HMG-CoA synthase complex channels the intermediate via a fused CoA-binding site, which allows for efficient coupling of the endergonic thiolase reaction with the exergonic HMGCS reaction.

The catalysed reaction is acetoacetyl-CoA + acetyl-CoA + H2O = (3S)-3-hydroxy-3-methylglutaryl-CoA + CoA + H(+). Its pathway is metabolic intermediate biosynthesis; (R)-mevalonate biosynthesis; (R)-mevalonate from acetyl-CoA: step 2/3. Functionally, catalyzes the condensation of acetyl-CoA with acetoacetyl-CoA to form 3-hydroxy-3-methylglutaryl-CoA (HMG-CoA). Functions in the mevalonate (MVA) pathway leading to isopentenyl diphosphate (IPP), a key precursor for the biosynthesis of isoprenoid compounds that are building blocks of archaeal membrane lipids. In Pyrobaculum neutrophilum (strain DSM 2338 / JCM 9278 / NBRC 100436 / V24Sta) (Thermoproteus neutrophilus), this protein is Hydroxymethylglutaryl-CoA synthase.